We begin with the raw amino-acid sequence, 757 residues long: Endosialin (757 aa).

The N-terminal stretch at 1-17 is a signal peptide; the sequence is MLLRLLLAWAAAGPTLG. The Extracellular portion of the chain corresponds to 18-687; that stretch reads QDPWAAEPRA…EHSQRDDRWL (670 aa). The 127-residue stretch at 30 to 156 folds into the C-type lectin domain; sequence GPSSCYALFP…CTLAVDGYLC (127 aa). Threonine 60 is a glycosylation site (O-linked (GalNAc...) threonine). A disulfide bridge connects residues cysteine 131 and cysteine 147. The 71-residue stretch at 162–232 folds into the Sushi domain; the sequence is GACPALQDEA…WSRAGPLCLG (71 aa). The 40-residue stretch at 312–351 folds into the EGF-like; calcium-binding domain; sequence DTDECQIAGVCQQMCVNYVGGFECYCSEGHELEADGISCS. 3 disulfide bridges follow: cysteine 316–cysteine 326, cysteine 322–cysteine 335, and cysteine 337–cysteine 350. 15 O-linked (GalNAc...) threonine glycosylation sites follow: threonine 401, threonine 428, threonine 448, threonine 456, threonine 459, threonine 472, threonine 519, threonine 541, threonine 543, threonine 544, threonine 545, threonine 587, threonine 593, threonine 594, and threonine 595. 2 O-linked (GalNAc...) serine glycosylation sites follow: serine 598 and serine 601. Threonine 612 and threonine 619 each carry an O-linked (GalNAc...) threonine glycan. A compositionally biased stretch (low complexity) spans 618–627; it reads PTLLPSQSPT. A disordered region spans residues 618 to 662; it reads PTLLPSQSPTNQTSPISPTHPHSKAPQIPREDGPSPKLALWLPSP. O-linked (GalNAc...) serine glycosylation is found at serine 623 and serine 625. Threonine 627 and threonine 630 each carry an O-linked (GalNAc...) threonine glycan. O-linked (GalNAc...) serine glycosylation occurs at serine 631. A glycan (O-linked (GalNAc...) threonine) is linked at threonine 636. An O-linked (GalNAc...) serine glycan is attached at serine 640. A helical transmembrane segment spans residues 688–708; it reads LVALLVPTCVFLVVLLALGIV. Over 709 to 757 the chain is Cytoplasmic; the sequence is YCTRCGPHAPNKRITDCYRWVIHAGSKSPTEPMPPRGSLTGVQTCRTSV. The tract at residues 737 to 757 is disordered; the sequence is PTEPMPPRGSLTGVQTCRTSV. Serine 746 is subject to Phosphoserine. The segment covering 748–757 has biased composition (polar residues); that stretch reads TGVQTCRTSV.

Interacts with PDGFRA; this interaction promotes PDGF receptor signaling pathway. Interacts with integrin beta-1/ITGB1. Interacts with insulin receptor/INSR; this interaction diminishes INSR autophosphorylation. Post-translationally, O-glycosylated with sialylated oligosaccharides. May be N-glycosylated. Expressed in tumor endothelial cells but absent or barely detectable in normal endothelial cells. Expressed in metastatic lesions of the liver and during angiogenesis of corpus luteum formation and wound healing. Expressed in vascular endothelial cells of malignant tumors but not in normal blood vessels. Expressed in stromal fibroblasts. Strongly expressed in pericytes. Expressed on stromal cells and cells with lymphoid morphology such a T-cells.

The protein localises to the membrane. Cell surface glycoprotein involved in various biological processes including angiogenesis, immune response modulation, and tissue remodeling and repair. Participates in pericyte proliferation through positive modulation of the PDGF receptor signaling pathway. Acts as a scaffold for factor X, triggering allosteric changes and the spatial re-alignment of factor X with the TF-factor VIIa complex, thereby enhancing coagulation activation. Modulates the insulin signaling pathway by interacting with insulin receptor/INSR and by diminishing its capacity to be autophosphorylated in response to insulin. Also regulates LPS-induced inflammatory response in macrophages by favoring the production of proinflammatory cytokines. In human, negatively regulates T-cell proliferation compared with stromal cells where it increases proliferation. This is Endosialin (CD248) from Homo sapiens (Human).